The following is a 2080-amino-acid chain: Dysferlin (2080 aa).

Residues Met1–Phe101 form the C2 1 domain. Topologically, residues Met1–Ala2046 are cytoplasmic. Ca(2+)-binding residues include Asp18, Ile19, Asp21, and Asn40. Residues Leu132–Thr144 are compositionally biased toward pro residues. Residues Leu132–Asp215 are disordered. Positions Gly155–Pro172 are enriched in acidic residues. The residue at position 166 (Thr166) is a Phosphothreonine. Residues Thr166 and Gly167 each carry the phosphoserine modification. 2 positions are modified to phosphothreonine: Tyr197 and Pro198. C2 domains lie at Lys203 to Leu321, Asp360 to Pro496, Gly1136 to Arg1262, Pro1310 to Pro1438, Pro1561 to Gly1679, and Gly1795 to Ser1943. 4 residues coordinate Ca(2+): Asp1168, Asp1174, Asp1230, and Asp1232. Positions 1594, 1600, 1649, 1651, 1914, 1917, and 1920 each coordinate Ca(2+). A disordered region spans residues Ser1995–Asp2017. A helical membrane pass occupies residues Ile2047–Phe2067. Residues Pro2068–Ser2080 are Extracellular-facing.

Belongs to the ferlin family. In terms of assembly, interacts with CACNA1S. Interacts with ANXA1; the interaction is Ca(2+)- and injury state-dependent. Interacts with ANXA2; the interaction is Ca(2+)- and injury state-dependent. Interacts with CACNA1S and PARVB. Interacts with TRIM72/MG53; interaction is required for transport to sites of cell injury during repair patch formation. Interacts with RIPOR2; this interaction occurs during early myogenic differentiation. Interacts with CAV3 and PARVB. Interacts with AHNAK; the interaction is direct and Ca(2+)-independent. Interacts with AHNAK2; the interaction is direct and Ca(2+)-independent. Ca(2+) serves as cofactor. Expressed in skeletal muscle, myoblast, myotube and in the syncytiotrophoblast (STB) of the placenta (at protein level). Ubiquitous. Highly expressed in skeletal muscle. Also found in heart, brain, spleen, intestine, placenta and at lower levels in liver, lung, kidney and pancreas.

The protein localises to the cell membrane. The protein resides in the sarcolemma. Its subcellular location is the cytoplasmic vesicle membrane. In terms of biological role, key calcium ion sensor involved in the Ca(2+)-triggered synaptic vesicle-plasma membrane fusion. Plays a role in the sarcolemma repair mechanism of both skeletal muscle and cardiomyocytes that permits rapid resealing of membranes disrupted by mechanical stress. This is Dysferlin (DYSF) from Homo sapiens (Human).